Here is a 561-residue protein sequence, read N- to C-terminus: Microtubule-associated protein VP6 (561 aa).

Interacts with VP2.

The protein localises to the virion. The protein resides in the host cytoplasm. Its subcellular location is the host cytoskeleton. Minor inner capsid component. Displays NTPase and RNA 5'-triphosphatase (RTPase) activities. May function as a cofactor of polymerase VP2. Associates with microtubules and plays a role in the formation, structural organization and morphology of viral inclusions, where the assembly of cores and the replication of viral RNA occur. This Lymantria dispar cypovirus 1 (isolate Rao) (LdCPV-1) protein is Microtubule-associated protein VP6 (S6).